The primary structure comprises 33 residues: Beta-amanitin proprotein (33 aa).

The propeptide occupies 1-10 (MSDINATRLP). Positions 11–18 (IWGIGCDP) form a cross-link, cyclopeptide (Ile-Pro). The 2'-cysteinyl-6'-hydroxytryptophan sulfoxide (Trp-Cys) cross-link spans 12 to 16 (WGIGC). Residues 19–33 (CVGDEVTALLTRGEA) constitute a propeptide that is removed on maturation.

This sequence belongs to the MSDIN fungal toxin family. Processed by the macrocyclase-peptidase enzyme POPB to yield a toxic cyclic decapeptide. POPB first removes 10 residues from the N-terminus. Conformational trapping of the remaining peptide forces the enzyme to release this intermediate rather than proceed to macrocyclization. The enzyme rebinds the remaining peptide in a different conformation and catalyzes macrocyclization of the N-terminal 8 residues.

In terms of biological role, toxin belonging to the bicyclic octapeptides amatoxins that acts by binding non-competitively to RNA polymerase II and greatly slowing the elongation of transcripts from target promoters. This is Beta-amanitin proprotein from Amanita fuligineoides.